A 527-amino-acid chain; its full sequence is Pentatricopeptide repeat-containing protein At4g25270, chloroplastic (527 aa).

Residues Met1–Leu47 constitute a chloroplast transit peptide. Residues Ser12–Phe44 are disordered. Over residues Met21–Arg35 the composition is skewed to basic residues. PPR repeat units lie at residues Asn126–Arg156, Ser159–Pro193, Asp194–Tyr228, Asp229–Lys259, Asp260–Pro294, Asp295–Trp326, Glu327–Ser361, Ser367–Pro389, Asp390–Pro425, and Lys426–Glu457. Positions Val462–Thr527 are type E motif; degenerate.

This sequence belongs to the PPR family. PCMP-E subfamily.

The protein resides in the plastid. Its subcellular location is the chloroplast. The protein is Pentatricopeptide repeat-containing protein At4g25270, chloroplastic (PCMP-E53) of Arabidopsis thaliana (Mouse-ear cress).